A 147-amino-acid chain; its full sequence is Leghemoglobin 3 (147 aa).

The 146-residue stretch at 2 to 147 folds into the Globin domain; that stretch reads GFTAQQEALV…LATAIKKAMG (146 aa). A Nitrated tyrosine modification is found at tyrosine 30. Serine 45 is a binding site for heme b. Serine 45 is modified (phosphoserine). Histidine 61 lines the O2 pocket. Heme b is bound by residues lysine 64, histidine 93, and lysine 96. Tyrosine 135 bears the Nitrated tyrosine mark.

It belongs to the plant globin family. In terms of assembly, monomer. In terms of processing, nitrated in effective nodules and particularly in hypoxic conditions; this mechanism may play a protective role in the symbiosis by buffering toxic peroxynitrite NO(2)(-). Nitration level decrease during nodule senescence. Phosphorylation at Ser-45 disrupts the molecular environment of its porphyrin ring oxygen binding pocket, thus leading to a reduced oxygen consumption and to the delivery of oxygen O(2) to symbiosomes. As to expression, specifically and strongly expressed in root nodules and at low levels in seedlings.

It is found in the cytoplasm. The protein resides in the cytosol. It localises to the nucleus. Its function is as follows. Leghemoglobin that reversibly binds oxygen O(2) through a pentacoordinated heme iron. In root nodules, facilitates the diffusion of oxygen to the bacteroids while preventing the bacterial nitrogenase from being inactivated by buffering dioxygen, nitric oxide and carbon monoxide, and promoting the formation of reactive oxygen species (ROS, e.g. H(2)O(2)). This role is essential for symbiotic nitrogen fixation (SNF). The chain is Leghemoglobin 3 from Lotus japonicus (Lotus corniculatus var. japonicus).